The primary structure comprises 442 residues: tRNA modification GTPase MnmE (442 aa).

Residues Arg23, Glu82, and Lys121 each coordinate (6S)-5-formyl-5,6,7,8-tetrahydrofolate. Residues 215–364 (GTSLILAGKP…VKQALIQWMQ (150 aa)) form the TrmE-type G domain. K(+) is bound at residue Asn225. GTP contacts are provided by residues 225–230 (NVGKSS), 244–250 (THIPGTT), 269–272 (DTAG), and 325–328 (NKAD). Ser229 contributes to the Mg(2+) binding site. The K(+) site is built by Thr244, Ile246, and Thr249. Thr250 is a binding site for Mg(2+). Lys442 contributes to the (6S)-5-formyl-5,6,7,8-tetrahydrofolate binding site.

It belongs to the TRAFAC class TrmE-Era-EngA-EngB-Septin-like GTPase superfamily. TrmE GTPase family. As to quaternary structure, homodimer. Heterotetramer of two MnmE and two MnmG subunits. K(+) serves as cofactor.

Its subcellular location is the cytoplasm. Its function is as follows. Exhibits a very high intrinsic GTPase hydrolysis rate. Involved in the addition of a carboxymethylaminomethyl (cmnm) group at the wobble position (U34) of certain tRNAs, forming tRNA-cmnm(5)s(2)U34. This is tRNA modification GTPase MnmE from Chlamydia pneumoniae (Chlamydophila pneumoniae).